A 758-amino-acid chain; its full sequence is Spastin (758 aa).

Positions 1–103 are disordered; it reads MVRTKNQSSS…SPRSGHHHSY (103 aa). The Cytoplasmic portion of the chain corresponds to 1 to 121; sequence MVRTKNQSSS…KQNLYVVSFP (121 aa). The tract at residues 1–210 is required for localization to punctate cytoplasmic foci; it reads MVRTKNQSSS…RPIQPLEMAA (210 aa). Composition is skewed to low complexity over residues 8–28, 43–58, 66–76, and 85–95; these read SSSS…SSGA, RSSS…AGGS, SSNRRSPGSSP, and TDDLTPTTCSP. Positions 122 to 142 form an intramembrane region, helical; it reads IIFLFNVLRSLIYQLFCIFRY. The Cytoplasmic portion of the chain corresponds to 143 to 758; sequence LYGASTKVIY…WSQDYGDITI (616 aa). 2 stretches are compositionally biased toward polar residues: residues 169–180 and 189–198; these read SKEQQQSLNHPS and QEQQLSNQPQ. Residues 169–202 are disordered; that stretch reads SKEQQQSLNHPSELNREGDGQEQQLSNQPQRFRP. A sufficient for interaction with microtubules and microtubule severing region spans residues 208-758; the sequence is MAANRPGGGY…WSQDYGDITI (551 aa). The MIT domain maps to 233-308; it reads HRRAFEYISK…SMARDRLHFL (76 aa). Positions 323–339 are enriched in basic and acidic residues; it reads KEKQKEEARSKPQKSRE. Positions 323-454 are disordered; sequence KEKQKEEARS…GPSGSGASTP (132 aa). 2 stretches are compositionally biased toward polar residues: residues 390 to 406 and 425 to 454; these read NKSQ…TSVG and QFSS…ASTP. The required for interaction with microtubules stretch occupies residues 443-455; that stretch reads NNGPSGSGASTPV. Residue 523–530 coordinates ATP; that stretch reads GPPGNGKT.

This sequence belongs to the AAA ATPase family. Spastin subfamily. Homohexamer. The homohexamer is stabilized by ATP-binding. The homohexamer may adopt a ring conformation through which microtubules pass prior to being severed. Interacts with microtubules. Interacts with atl; may be involved in microtubule dynamics.

It localises to the membrane. The protein localises to the cytoplasm. It is found in the cytoskeleton. Its subcellular location is the microtubule organizing center. The protein resides in the centrosome. It localises to the chromosome. The protein localises to the lipid droplet. The catalysed reaction is n ATP + n H2O + a microtubule = n ADP + n phosphate + (n+1) alpha/beta tubulin heterodimers.. ATP-dependent microtubule severing protein. Stimulates microtubule minus-end depolymerization and poleward microtubule flux in the mitotic spindle. Regulates microtubule stability in the neuromuscular junction synapse. Involved in lipid metabolism by regulating the size and distribution of lipid droplets. Involved in axon regeneration by regulating microtubule severing. This is Spastin from Drosophila simulans (Fruit fly).